A 116-amino-acid polypeptide reads, in one-letter code: Large ribosomal subunit protein bL17 (116 aa).

The protein belongs to the bacterial ribosomal protein bL17 family. Part of the 50S ribosomal subunit. Contacts protein L32.

This Trichormus variabilis (strain ATCC 29413 / PCC 7937) (Anabaena variabilis) protein is Large ribosomal subunit protein bL17.